Here is a 103-residue protein sequence, read N- to C-terminus: uncharacterized protein (103 aa).

The next 3 helical transmembrane spans lie at 1 to 21 (MPGV…VFLS), 29 to 49 (IAFI…TGYF), and 69 to 89 (VVEW…GLLF).

It localises to the cell membrane. This is an uncharacterized protein from Methanocaldococcus jannaschii (strain ATCC 43067 / DSM 2661 / JAL-1 / JCM 10045 / NBRC 100440) (Methanococcus jannaschii).